Consider the following 145-residue polypeptide: Putative pre-16S rRNA nuclease (145 aa).

Belongs to the YqgF nuclease family.

Its subcellular location is the cytoplasm. Functionally, could be a nuclease involved in processing of the 5'-end of pre-16S rRNA. This is Putative pre-16S rRNA nuclease from Microcystis aeruginosa (strain NIES-843 / IAM M-2473).